Consider the following 272-residue polypeptide: HMP-PP phosphatase (272 aa).

Aspartate 8 functions as the Nucleophile in the catalytic mechanism. Aspartate 8, aspartate 10, and aspartate 212 together coordinate Mg(2+).

The protein belongs to the HAD-like hydrolase superfamily. Cof family. It depends on Mg(2+) as a cofactor.

It carries out the reaction 4-amino-2-methyl-5-(diphosphooxymethyl)pyrimidine + H2O = 4-amino-2-methyl-5-(phosphooxymethyl)pyrimidine + phosphate + H(+). Catalyzes the hydrolysis of 4-amino-2-methyl-5-hydroxymethylpyrimidine pyrophosphate (HMP-PP) to 4-amino-2-methyl-5-hydroxymethylpyrimidine phosphate (HMP-P). In Klebsiella pneumoniae (strain 342), this protein is HMP-PP phosphatase.